We begin with the raw amino-acid sequence, 56 residues long: Large ribosomal subunit protein bL32 (56 aa).

The span at 1–20 (MAVPKRRTSRSNTRSRRAQW) shows a compositional bias: basic residues. The disordered stretch occupies residues 1–26 (MAVPKRRTSRSNTRSRRAQWKAKAPA).

Belongs to the bacterial ribosomal protein bL32 family.

In Parafrankia sp. (strain EAN1pec), this protein is Large ribosomal subunit protein bL32.